The sequence spans 458 residues: MSITKEFDTITAISTPLGEGAIGIVRLSGTDALAIAQSVFKGKNLEQVASHTINYGHIIDPKTGTIIDEVMVSVMLAPKTFTRENVVEINTHGGIAVTNEILQLLIRQGARMAEPGEFTKRAFLNGRVDLTQAEAVMDIIRAKTDKAMTIAVKQLDGSLSQLINDTRQEILNTLAQVEVNIDYPEYDDVEEMTTALLREKTQEFQSLLENLLRTAKRGKILREGLSTAIIGRPNVGKSSLLNNLLREDKAIVTDIAGTTRDVIEEYVNIKGVPLKLVDTAGIRETDDLVEQIGVERSKKALQESDLVLLVLNASEKLTDQDRALLNLSQDSNRIILLNKTDLEQKIELEQLPDDYIPISVLTNQNINLIEDRINQLFFDNAGLVEQDATYLSNARHISLIEKAVQSLEAVNDGLALGMPVDLLQVDLTRTWEILGEITGDAAPDELITQLFSQFCLGK.

Arg26, Glu88, and Arg127 together coordinate (6S)-5-formyl-5,6,7,8-tetrahydrofolate. The TrmE-type G domain maps to 224–378 (GLSTAIIGRP…IEDRINQLFF (155 aa)). Asn234 is a binding site for K(+). Residues 234-239 (NVGKSS), 253-259 (TDIAGTT), and 278-281 (DTAG) each bind GTP. Ser238 contributes to the Mg(2+) binding site. 3 residues coordinate K(+): Thr253, Ile255, and Thr258. Thr259 contacts Mg(2+). Lys458 is a binding site for (6S)-5-formyl-5,6,7,8-tetrahydrofolate.

It belongs to the TRAFAC class TrmE-Era-EngA-EngB-Septin-like GTPase superfamily. TrmE GTPase family. Homodimer. Heterotetramer of two MnmE and two MnmG subunits. K(+) serves as cofactor.

It localises to the cytoplasm. Functionally, exhibits a very high intrinsic GTPase hydrolysis rate. Involved in the addition of a carboxymethylaminomethyl (cmnm) group at the wobble position (U34) of certain tRNAs, forming tRNA-cmnm(5)s(2)U34. The polypeptide is tRNA modification GTPase MnmE (Streptococcus pyogenes serotype M6 (strain ATCC BAA-946 / MGAS10394)).